The following is a 146-amino-acid chain: Large ribosomal subunit protein uL13 (146 aa).

Belongs to the universal ribosomal protein uL13 family. As to quaternary structure, part of the 50S ribosomal subunit.

In terms of biological role, this protein is one of the early assembly proteins of the 50S ribosomal subunit, although it is not seen to bind rRNA by itself. It is important during the early stages of 50S assembly. The protein is Large ribosomal subunit protein uL13 of Spiroplasma citri.